Consider the following 166-residue polypeptide: Small ribosomal subunit protein uS5 (166 aa).

The region spanning 11–74 is the S5 DRBM domain; it reads LEDRVVAINR…EDAKKNLVEV (64 aa).

The protein belongs to the universal ribosomal protein uS5 family. As to quaternary structure, part of the 30S ribosomal subunit. Contacts proteins S4 and S8.

Functionally, with S4 and S12 plays an important role in translational accuracy. In terms of biological role, located at the back of the 30S subunit body where it stabilizes the conformation of the head with respect to the body. The chain is Small ribosomal subunit protein uS5 from Enterococcus faecalis (strain ATCC 700802 / V583).